The following is a 51-amino-acid chain: Large ribosomal subunit protein eL39 (51 aa).

Belongs to the eukaryotic ribosomal protein eL39 family.

The sequence is that of Large ribosomal subunit protein eL39 from Pyrobaculum neutrophilum (strain DSM 2338 / JCM 9278 / NBRC 100436 / V24Sta) (Thermoproteus neutrophilus).